The primary structure comprises 285 residues: 2-dehydro-3-deoxyphosphooctonate aldolase (285 aa).

This sequence belongs to the KdsA family.

It localises to the cytoplasm. It carries out the reaction D-arabinose 5-phosphate + phosphoenolpyruvate + H2O = 3-deoxy-alpha-D-manno-2-octulosonate-8-phosphate + phosphate. Its pathway is carbohydrate biosynthesis; 3-deoxy-D-manno-octulosonate biosynthesis; 3-deoxy-D-manno-octulosonate from D-ribulose 5-phosphate: step 2/3. The protein operates within bacterial outer membrane biogenesis; lipopolysaccharide biosynthesis. This chain is 2-dehydro-3-deoxyphosphooctonate aldolase, found in Polaromonas sp. (strain JS666 / ATCC BAA-500).